Consider the following 185-residue polypeptide: MIDVGDLRKGDMIVYQNEMYRVIEANKHFMGRGSGLIRTRLKSVITGLIKEVSFSSGEKVEEADISFRKAQYLYNDGDHYYFMLLDTYEQYSLPAQELEDEKFYLTENLEVDLIFFNGNPVSIQLPTVVVLTVIDTEPNFKGNTVSGGGKPATLETGLKTTVPFFVERGQKIKVDTRTGDYLERA.

This sequence belongs to the elongation factor P family.

The protein localises to the cytoplasm. It functions in the pathway protein biosynthesis; polypeptide chain elongation. In terms of biological role, involved in peptide bond synthesis. Stimulates efficient translation and peptide-bond synthesis on native or reconstituted 70S ribosomes in vitro. Probably functions indirectly by altering the affinity of the ribosome for aminoacyl-tRNA, thus increasing their reactivity as acceptors for peptidyl transferase. This is Elongation factor P from Petrotoga mobilis (strain DSM 10674 / SJ95).